A 60-amino-acid chain; its full sequence is Large ribosomal subunit protein uL30 (60 aa).

It belongs to the universal ribosomal protein uL30 family. In terms of assembly, part of the 50S ribosomal subunit.

In Leptothrix cholodnii (strain ATCC 51168 / LMG 8142 / SP-6) (Leptothrix discophora (strain SP-6)), this protein is Large ribosomal subunit protein uL30.